The sequence spans 344 residues: Ferredoxin--NADP reductase (344 aa).

FAD contacts are provided by Asp36, Gln44, Tyr49, Val89, Phe127, Asp291, and Thr332.

The protein belongs to the ferredoxin--NADP reductase type 2 family. As to quaternary structure, homodimer. It depends on FAD as a cofactor.

It carries out the reaction 2 reduced [2Fe-2S]-[ferredoxin] + NADP(+) + H(+) = 2 oxidized [2Fe-2S]-[ferredoxin] + NADPH. This chain is Ferredoxin--NADP reductase, found in Beijerinckia indica subsp. indica (strain ATCC 9039 / DSM 1715 / NCIMB 8712).